Reading from the N-terminus, the 331-residue chain is Protein FLX-like 1 (331 aa).

Positions 1–51 are disordered; that stretch reads MSGRNRGPPPPSMKGGSYSGLQAPVHQPPFVRGLGGGPVPPPPHPSMIDDS. Residues 69–252 adopt a coiled-coil conformation; it reads ILEDRLAAQN…AEIANSETSA (184 aa). Residues 306-321 show a composition bias toward low complexity; it reads QAAWAGGYDPQQQQQQ. Positions 306–331 are disordered; sequence QAAWAGGYDPQQQQQQQPPPQGQGHR. Positions 322–331 are enriched in pro residues; it reads QPPPQGQGHR.

The protein belongs to the FLX family. In terms of assembly, interacts with FRI.

Its function is as follows. Has no transcriptional activation activity. The protein is Protein FLX-like 1 (FLXL1) of Arabidopsis thaliana (Mouse-ear cress).